The sequence spans 257 residues: Flap endonuclease Xni (257 aa).

Mg(2+) is bound at residue D112. The 5'-3' exonuclease domain occupies 169 to 256 (EQKKLVEFWA…LGFSLKQLRL (88 aa)). K(+)-binding residues include F179, A180, P188, V190, and I193. Positions 192-197 (GIGTKS) are interaction with DNA.

The protein belongs to the Xni family. Mg(2+) is required as a cofactor. Requires K(+) as cofactor.

Its function is as follows. Has flap endonuclease activity. During DNA replication, flap endonucleases cleave the 5'-overhanging flap structure that is generated by displacement synthesis when DNA polymerase encounters the 5'-end of a downstream Okazaki fragment. This is Flap endonuclease Xni from Pseudoalteromonas translucida (strain TAC 125).